The following is a 254-amino-acid chain: Receptor expression-enhancing protein 2 (254 aa).

A run of 2 helical transmembrane segments spans residues 1-21 and 35-55; these read MVSWIISRLVVLIFGTLYPAY and YVKWMMYWIVFAFFTTAETLT. The residue at position 152 (S152) is a Phosphoserine. A disordered region spans residues 194–254; the sequence is LSLRSSTSQP…KKSSGGGDSA (61 aa). A compositionally biased stretch (basic and acidic residues) spans 205 to 219; sequence PRTETSEDDLGDKAP.

The protein belongs to the DP1 family. In terms of assembly, interacts with odorant receptor proteins.

The protein localises to the membrane. Functionally, required for endoplasmic reticulum (ER) network formation, shaping and remodeling. May enhance the cell surface expression of odorant receptors. The sequence is that of Receptor expression-enhancing protein 2 (Reep2) from Mus musculus (Mouse).